The following is a 1088-amino-acid chain: Methionine S-methyltransferase (1088 aa).

The protein belongs to the class I-like SAM-binding methyltransferase superfamily. In terms of assembly, homotetramer. Expressed in the shoot, scutellum, and aleurone cells but not in the root or endosperm.

It is found in the cytoplasm. It catalyses the reaction L-methionine + S-adenosyl-L-methionine = S-methyl-L-methionine + S-adenosyl-L-homocysteine. In terms of biological role, catalyzes the S-methylmethionine (SMM) biosynthesis from adenosyl-L-homocysteine (AdoMet) and methionine. SMM biosynthesis (by MMT1) and degradation (by HMT-1, HMT-2 and HMT-3) constitute the SMM cycle in plants, which is probably required to achieve short term control of AdoMet level. Also able to catalyze the selenium-methylmethionine (SeMM) from AdoMet and selenium-methionine (SeMet). May play a role in phoem sulfur transport; such function is however not essential. The chain is Methionine S-methyltransferase (MMT1) from Hordeum vulgare (Barley).